The following is a 2167-amino-acid chain: SH3 and multiple ankyrin repeat domains protein 1 (2167 aa).

The disordered stretch occupies residues 1-63; that stretch reads MTHSPATSED…TRGLQGRSMS (63 aa). Positions 17 to 32 are enriched in low complexity; that stretch reads SECPEGGSESDSSPDG. The segment covering 33 to 47 has biased composition (gly residues); it reads PGRGPQGTRGRGSGA. Arginine 43 is subject to Omega-N-methylarginine. At tyrosine 186 the chain carries Phosphotyrosine. ANK repeat units lie at residues 195 to 210, 212 to 245, 246 to 278, 279 to 312, 313 to 345, 346 to 378, and 379 to 395; these read VARL…YHDS, SGET…FRAR, DGMT…YKDR, RGLT…IADE, NGWQ…AQNA, SGNT…VKNN, and NGQT…NFEL. Disordered stretches follow at residues 413 to 432 and 453 to 546; these read SPKY…TVPP and APGA…SRGR. Positions 453-479 are enriched in low complexity; it reads APGASSSGTPGPTSGPQGQSQPSAPST. Residues 527-542 are compositionally biased toward gly residues; that stretch reads PAGGTGGSGGPGGSLG. Position 540 is a phosphoserine (serine 540). At arginine 544 the chain carries Omega-N-methylarginine. The SH3 domain maps to 554–613; that stretch reads VPGRSFMAVKSYQAQGEGEISLSKGEKIKVLSIGEGGFWEGQVKGRVGWFPSDCLEEVAN. A phosphoserine mark is found at serine 638, serine 641, serine 671, and serine 791. The region spanning 663–757 is the PDZ domain; the sequence is TVLLQKKDSE…TLMVKVVMVT (95 aa). The interval 841 to 894 is disordered; it reads ISASESPGPGGLASLGKHRPKGFFATESSFDPHHRSQPSYDRPSFLPPGPGLML. Residue serine 898 is modified to Phosphoserine. Disordered regions lie at residues 917 to 1233, 1245 to 1294, 1308 to 1417, 1429 to 1725, 1740 to 1787, 1842 to 1866, 1898 to 1988, and 2002 to 2029; these read SRSL…LDFT, RREG…SIDE, GGSS…VLRL, RAGL…AGVA, GQAF…DPVT, KLLP…QPQA, PWAR…STRH, and RRAP…LPIL. Over residues 928–947 the composition is skewed to pro residues; sequence IPPPPTTSPPEPPYSTPPAP. Residue arginine 958 is modified to Omega-N-methylarginine. Residues 964 to 980 are compositionally biased toward low complexity; the sequence is PSSGGPLPASSPSSFDG. The segment covering 1004–1028 has biased composition (basic residues); it reads AHHHPPHHHHHHAPPPQPHHHHAHP. Arginine 1059 is subject to Omega-N-methylarginine. Positions 1064–1085 are enriched in low complexity; that stretch reads SPTSGAPSPSHHSSSGGSSGPT. Omega-N-methylarginine is present on residues arginine 1098 and arginine 1109. Low complexity-rich tracts occupy residues 1132–1146 and 1171–1184; these read SIPS…ALPR and STSS…GSST. Residues 1203-1224 are compositionally biased toward pro residues; the sequence is SPAPATSPVPPSPSPVPTPASP. Residues 1245–1256 show a composition bias toward basic and acidic residues; the sequence is RREGGWQNEARR. The residue at position 1257 (arginine 1257) is an Asymmetric dimethylarginine. The residue at position 1291 (serine 1291) is a Phosphoserine. Over residues 1363–1372 the composition is skewed to basic and acidic residues; that stretch reads ARERALKESS. A compositionally biased stretch (pro residues) spans 1378–1395; it reads PQPPPRPPSPRYDAPPPT. The span at 1396-1408 shows a compositional bias: basic residues; sequence LHHHSPHSPHSPH. Arginine 1429 is subject to Omega-N-methylarginine. Serine 1442 carries the phosphoserine modification. Composition is skewed to low complexity over residues 1459-1469 and 1530-1541; these read PGVGPLLLQLG and RRVLPTSPTSPR. A compositionally biased stretch (pro residues) spans 1589 to 1615; that stretch reads PLTPGPPHPLPDPPSPATPLPAAPPPA. Residues 1624-1641 show a composition bias toward polar residues; that stretch reads DSTASSLTSYDSEVATLT. Pro residues predominate over residues 1648–1676; sequence PGDPPAPGPPAPAAPAPPAPQPGPDPPPG. Residues 1684 to 1694 are compositionally biased toward basic and acidic residues; that stretch reads VDSRSSSDHPL. Residues 1695–1708 are compositionally biased toward low complexity; sequence ETISSASTLSSLSA. The span at 1709–1724 shows a compositional bias: gly residues; sequence EGGGNTGGVAGGGAGV. Positions 1850-1861 are enriched in pro residues; that stretch reads PGPPPPPLPGPL. Arginine 1901 bears the Omega-N-methylarginine mark. 3 stretches are compositionally biased toward low complexity: residues 1934–1945, 1960–1985, and 2002–2012; these read SQTSLLSKPSSS, TGSG…ASAS, and RRAPSPSLLPA. Arginine 2022, arginine 2042, and arginine 2080 each carry omega-N-methylarginine. One can recognise an SAM domain in the interval 2104 to 2167; it reads WTKFDVADWL…DRALKFFLER (64 aa).

This sequence belongs to the SHANK family. In terms of assembly, may homomultimerize via its SAM domain. Interacts with the C-terminus of SSTR2 via the PDZ domain. Interacts with SHARPIN, SPTAN1 and DLGAP1/GKAP. Part of a complex with DLG4/PSD-95 and DLGAP1/GKAP. Interacts with BAIAP2. Interacts with IGSF9. Interacts with HOMER1 and HOMER3. Expressed only in brain (neuropil of cortex, CA1 region hippocampus and molecular layer of cerebellum).

The protein localises to the cytoplasm. It localises to the synapse. The protein resides in the postsynaptic density. Functionally, seems to be an adapter protein in the postsynaptic density (PSD) of excitatory synapses that interconnects receptors of the postsynaptic membrane including NMDA-type and metabotropic glutamate receptors, and the actin-based cytoskeleton. Plays a role in the structural and functional organization of the dendritic spine and synaptic junction. Overexpression promotes maturation of dendritic spines and the enlargement of spine heads via its ability to recruit Homer to postsynaptic sites, and enhances presynaptic function. The polypeptide is SH3 and multiple ankyrin repeat domains protein 1 (Shank1) (Rattus norvegicus (Rat)).